The sequence spans 426 residues: GTPase Obg (426 aa).

The region spanning 1 to 158 (MFVDQVSVYV…RNIKVELKLI (158 aa)) is the Obg domain. Disordered stretches follow at residues 66–86 (GKRG…DPLV) and 119–146 (GGRG…GEPG). The 171-residue stretch at 159 to 329 (ADVGLVGFPS…LLFAIADKLE (171 aa)) folds into the OBG-type G domain. GTP-binding positions include 165-172 (GFPSVGKS), 190-194 (FTTLS), 212-215 (DLPG), 282-285 (NKMD), and 310-312 (SAL). S172 and T192 together coordinate Mg(2+). The region spanning 348 to 426 (RYQKEEDPFH…LLEYEFEFIE (79 aa)) is the OCT domain.

The protein belongs to the TRAFAC class OBG-HflX-like GTPase superfamily. OBG GTPase family. Monomer. The cofactor is Mg(2+).

It is found in the cytoplasm. An essential GTPase which binds GTP, GDP and possibly (p)ppGpp with moderate affinity, with high nucleotide exchange rates and a fairly low GTP hydrolysis rate. Plays a role in control of the cell cycle, stress response, ribosome biogenesis and in those bacteria that undergo differentiation, in morphogenesis control. The chain is GTPase Obg from Oceanobacillus iheyensis (strain DSM 14371 / CIP 107618 / JCM 11309 / KCTC 3954 / HTE831).